We begin with the raw amino-acid sequence, 409 residues long: NADH-quinone oxidoreductase subunit D (409 aa).

The protein belongs to the complex I 49 kDa subunit family. In terms of assembly, NDH-1 is composed of 14 different subunits. Subunits NuoB, C, D, E, F, and G constitute the peripheral sector of the complex.

Its subcellular location is the cell inner membrane. It carries out the reaction a quinone + NADH + 5 H(+)(in) = a quinol + NAD(+) + 4 H(+)(out). NDH-1 shuttles electrons from NADH, via FMN and iron-sulfur (Fe-S) centers, to quinones in the respiratory chain. The immediate electron acceptor for the enzyme in this species is believed to be ubiquinone. Couples the redox reaction to proton translocation (for every two electrons transferred, four hydrogen ions are translocated across the cytoplasmic membrane), and thus conserves the redox energy in a proton gradient. The protein is NADH-quinone oxidoreductase subunit D of Helicobacter pylori (strain G27).